Here is a 297-residue protein sequence, read N- to C-terminus: N-acetylneuraminate lyase (297 aa).

Residues serine 47 and threonine 48 each contribute to the aceneuramate site. Tyrosine 137 functions as the Proton donor in the catalytic mechanism. The active-site Schiff-base intermediate with substrate is the lysine 165. Positions 167, 189, 191, 192, and 208 each coordinate aceneuramate.

It belongs to the DapA family. NanA subfamily. As to quaternary structure, homotetramer.

Its subcellular location is the cytoplasm. It carries out the reaction aceneuramate = aldehydo-N-acetyl-D-mannosamine + pyruvate. The protein operates within amino-sugar metabolism; N-acetylneuraminate degradation; D-fructose 6-phosphate from N-acetylneuraminate: step 1/5. Catalyzes the reversible aldol cleavage of N-acetylneuraminic acid (sialic acid; Neu5Ac) to form pyruvate and N-acetylmannosamine (ManNAc) via a Schiff base intermediate. This is N-acetylneuraminate lyase from Escherichia coli (strain SMS-3-5 / SECEC).